The following is a 137-amino-acid chain: Ribosome-binding factor A (137 aa).

The segment at 110–137 is disordered; it reads RIQQEKEGATDDRDQNDSGEDATPHSND. A compositionally biased stretch (basic and acidic residues) spans 112-125; it reads QQEKEGATDDRDQN.

Belongs to the RbfA family. As to quaternary structure, monomer. Binds 30S ribosomal subunits, but not 50S ribosomal subunits or 70S ribosomes.

The protein resides in the cytoplasm. In terms of biological role, one of several proteins that assist in the late maturation steps of the functional core of the 30S ribosomal subunit. Associates with free 30S ribosomal subunits (but not with 30S subunits that are part of 70S ribosomes or polysomes). Required for efficient processing of 16S rRNA. May interact with the 5'-terminal helix region of 16S rRNA. In Rhodopirellula baltica (strain DSM 10527 / NCIMB 13988 / SH1), this protein is Ribosome-binding factor A.